Consider the following 70-residue polypeptide: ATP synthase subunit c (70 aa).

The next 2 membrane-spanning stretches (helical) occupy residues 4-24 (IAAGIAAGLAAVGAGVGNGLV) and 47-67 (FLGVGLIEALPILSIVIAFLV).

This sequence belongs to the ATPase C chain family. F-type ATPases have 2 components, F(1) - the catalytic core - and F(0) - the membrane proton channel. F(1) has five subunits: alpha(3), beta(3), gamma(1), delta(1), epsilon(1). F(0) has three main subunits: a(1), b(2) and c(10-14). The alpha and beta chains form an alternating ring which encloses part of the gamma chain. F(1) is attached to F(0) by a central stalk formed by the gamma and epsilon chains, while a peripheral stalk is formed by the delta and b chains.

It localises to the cell membrane. Functionally, f(1)F(0) ATP synthase produces ATP from ADP in the presence of a proton or sodium gradient. F-type ATPases consist of two structural domains, F(1) containing the extramembraneous catalytic core and F(0) containing the membrane proton channel, linked together by a central stalk and a peripheral stalk. During catalysis, ATP synthesis in the catalytic domain of F(1) is coupled via a rotary mechanism of the central stalk subunits to proton translocation. Key component of the F(0) channel; it plays a direct role in translocation across the membrane. A homomeric c-ring of between 10-14 subunits forms the central stalk rotor element with the F(1) delta and epsilon subunits. The polypeptide is ATP synthase subunit c (Limosilactobacillus fermentum (strain NBRC 3956 / LMG 18251) (Lactobacillus fermentum)).